A 121-amino-acid chain; its full sequence is Large ribosomal subunit protein bL12 (121 aa).

It belongs to the bacterial ribosomal protein bL12 family. Homodimer. Part of the ribosomal stalk of the 50S ribosomal subunit. Forms a multimeric L10(L12)X complex, where L10 forms an elongated spine to which 2 to 4 L12 dimers bind in a sequential fashion. Binds GTP-bound translation factors.

Functionally, forms part of the ribosomal stalk which helps the ribosome interact with GTP-bound translation factors. Is thus essential for accurate translation. This is Large ribosomal subunit protein bL12 from Enterobacter sp. (strain 638).